The primary structure comprises 282 residues: Shikimate dehydrogenase (NADP(+)) (282 aa).

Residues 19–21 and Thr-66 contribute to the shikimate site; that span reads TQS. Catalysis depends on Lys-70, which acts as the Proton acceptor. Shikimate-binding residues include Asn-91 and Asp-107. NADP(+) contacts are provided by residues 132-136, 155-160, Ile-224, and Gly-246; these read GAGGA and NRTITR.

Belongs to the shikimate dehydrogenase family. In terms of assembly, homodimer.

It catalyses the reaction shikimate + NADP(+) = 3-dehydroshikimate + NADPH + H(+). The protein operates within metabolic intermediate biosynthesis; chorismate biosynthesis; chorismate from D-erythrose 4-phosphate and phosphoenolpyruvate: step 4/7. In terms of biological role, involved in the biosynthesis of the chorismate, which leads to the biosynthesis of aromatic amino acids. Catalyzes the reversible NADPH linked reduction of 3-dehydroshikimate (DHSA) to yield shikimate (SA). This Buchnera aphidicola subsp. Baizongia pistaciae (strain Bp) protein is Shikimate dehydrogenase (NADP(+)).